Here is a 527-residue protein sequence, read N- to C-terminus: EGF domain-specific O-linked N-acetylglucosamine transferase (527 aa).

Positions M1–S17 are cleaved as a signal peptide. Positions D295 to D297 match the Required for optimal activity motif. N354 is a glycosylation site (N-linked (GlcNAc...) asparagine). Residues R524–L527 carry the Prevents secretion from ER motif.

This sequence belongs to the glycosyltransferase 61 family.

It localises to the endoplasmic reticulum lumen. The enzyme catalyses L-seryl-[protein] + UDP-N-acetyl-alpha-D-glucosamine = 3-O-(N-acetyl-beta-D-glucosaminyl)-L-seryl-[protein] + UDP + H(+). It catalyses the reaction L-threonyl-[protein] + UDP-N-acetyl-alpha-D-glucosamine = 3-O-(N-acetyl-beta-D-glucosaminyl)-L-threonyl-[protein] + UDP + H(+). Functionally, catalyzes the transfer of a single N-acetylglucosamine from UDP-GlcNAc to a serine or threonine residue in extracellular proteins resulting in their modification with a beta-linked N-acetylglucosamine (O-GlcNAc). Specifically glycosylates the Thr residue located between the fifth and sixth conserved cysteines of folded EGF-like domains. This is EGF domain-specific O-linked N-acetylglucosamine transferase (EOGT) from Canis lupus familiaris (Dog).